Reading from the N-terminus, the 120-residue chain is MGVYTFVCRNNGGEWTAKQHSGEIEASAATPYELQRRLVAAASAADSRYGVQSSFSMVTPSSAVFQVIVGAVGGGAMMVSGGGGGGAAASGGAAAEAPKEEKKEEEKEESDDDMGFSLFD.

Positions 83-120 are disordered; it reads GGGGAAASGGAAAEAPKEEKKEEEKEESDDDMGFSLFD.

It belongs to the eukaryotic ribosomal protein P1/P2 family. Phosphorylated.

Its function is as follows. Plays an important role in the elongation step of protein synthesis. The sequence is that of Large ribosomal subunit protein P3 (RPP3A) from Zea mays (Maize).